The primary structure comprises 695 residues: Eukaryotic translation initiation factor 3 subunit B (695 aa).

The segment covering 1 to 10 (MAKKKGDEKA) has biased composition (basic and acidic residues). Positions 1-43 (MAKKKGDEKANPAPQSDNEEQNFEEEPDFDDPEDFVEIPEEEL) are disordered. Acidic residues predominate over residues 17–43 (DNEEQNFEEEPDFDDPEDFVEIPEEEL). One can recognise an RRM domain in the interval 60-144 (NVVVVDGCPQ…HTFLVNLFTD (85 aa)). 4 WD repeats span residues 164–205 (KVQS…PLLL), 295–335 (PPDE…LLDK), 338–373 (IKIPGIRDFSWSPSDNTLAYWVAEDKDVPARVTLLE), and 444–486 (EIKE…APTL).

Belongs to the eIF-3 subunit B family. In terms of assembly, component of the eukaryotic translation initiation factor 3 (eIF-3) complex.

The protein localises to the cytoplasm. In terms of biological role, RNA-binding component of the eukaryotic translation initiation factor 3 (eIF-3) complex, which is involved in protein synthesis of a specialized repertoire of mRNAs and, together with other initiation factors, stimulates binding of mRNA and methionyl-tRNAi to the 40S ribosome. The eIF-3 complex specifically targets and initiates translation of a subset of mRNAs involved in cell proliferation. The polypeptide is Eukaryotic translation initiation factor 3 subunit B (Bombyx mori (Silk moth)).